The chain runs to 544 residues: Prolyl 4-hydroxylase subunit alpha-3 (544 aa).

A signal peptide spans 1 to 19 (MGPGARLAALLAVLALGTG). Residues 107–131 (LEASENIRALKDGYEKVEQDLPAFE) adopt a coiled-coil conformation. A TPR repeat occupies 227–260 (EDALDHLAFAYFRAGNVSCALSLSREFLLYSPDN). Asparagine 242 carries an N-linked (GlcNAc...) asparagine glycan. One can recognise a Fe2OG dioxygenase domain in the interval 422-529 (YAEYLQVVNY…KWVANKWIHE (108 aa)). Residues histidine 440 and aspartate 442 each coordinate Fe cation. Asparagine 482 is a glycosylation site (N-linked (GlcNAc...) asparagine). Residue histidine 510 participates in Fe cation binding. Residue lysine 520 participates in 2-oxoglutarate binding.

Belongs to the P4HA family. As to quaternary structure, heterotetramer of two alpha-3 chains and two beta chains (the beta chain is the multi-functional PDI). Fe(2+) serves as cofactor. It depends on L-ascorbate as a cofactor. N-glycosylation plays no role in the catalytic activity. As to expression, highly expressed in placenta, liver and fetal skin. Weakly expressed in fetal epiphyseal cartilage, fetal liver, fibroblast, lung and skeletal muscle. Expressed also in fibrous cap of carotid atherosclerotic lesions.

The protein localises to the endoplasmic reticulum lumen. It carries out the reaction L-prolyl-[collagen] + 2-oxoglutarate + O2 = trans-4-hydroxy-L-prolyl-[collagen] + succinate + CO2. Functionally, catalyzes the post-translational formation of 4-hydroxyproline in -Xaa-Pro-Gly- sequences in collagens and other proteins. This Homo sapiens (Human) protein is Prolyl 4-hydroxylase subunit alpha-3 (P4HA3).